Reading from the N-terminus, the 117-residue chain is Large ribosomal subunit protein uL24 (117 aa).

The span at 1-10 (MSKQPRKQRK) shows a compositional bias: basic residues. Positions 1 to 28 (MSKQPRKQRKALYTAPLHKRHNSMSVHL) are disordered.

Belongs to the universal ribosomal protein uL24 family. As to quaternary structure, part of the 50S ribosomal subunit.

One of two assembly initiator proteins, it binds directly to the 5'-end of the 23S rRNA, where it nucleates assembly of the 50S subunit. Functionally, located at the polypeptide exit tunnel on the outside of the subunit. The polypeptide is Large ribosomal subunit protein uL24 (Methanosphaera stadtmanae (strain ATCC 43021 / DSM 3091 / JCM 11832 / MCB-3)).